We begin with the raw amino-acid sequence, 214 residues long: Adenylate kinase (214 aa).

Glycine 10 to threonine 15 contributes to the ATP binding site. The tract at residues serine 30–valine 59 is NMP. Residues threonine 31, arginine 36, glutamine 57 to valine 59, glycine 85 to arginine 88, and glutamine 92 each bind AMP. Residues glycine 122–aspartate 159 form an LID region. Residues arginine 123 and valine 132–tyrosine 133 each bind ATP. 2 residues coordinate AMP: arginine 156 and arginine 167. Glutamine 200 serves as a coordination point for ATP.

Belongs to the adenylate kinase family. In terms of assembly, monomer.

It localises to the cytoplasm. It carries out the reaction AMP + ATP = 2 ADP. The protein operates within purine metabolism; AMP biosynthesis via salvage pathway; AMP from ADP: step 1/1. Functionally, catalyzes the reversible transfer of the terminal phosphate group between ATP and AMP. Plays an important role in cellular energy homeostasis and in adenine nucleotide metabolism. This Shewanella putrefaciens (strain CN-32 / ATCC BAA-453) protein is Adenylate kinase.